The sequence spans 240 residues: MTASKDDAGASDDHASLLEALGVDVRPDLLRLALTHRSYAYENGGLPTNERLEFLGDSVLGLSITERLYHEHPDKSEGELAKLRASVVNMHALAEVARGLGEGGLGAHLLLGKGEELTGGRDKPSILADGMESLLGAVHLQHGIDVARGVVLRLFADLLERGPRMGAGLDWKTSLQELTAERGLGVPSYEISSTGPDHDKEFTATTVIGGRAYGQGVGRSKKEAEQKAAGAAYQALTAES.

The 131-residue stretch at Asp13–Gly143 folds into the RNase III domain. Position 53 (Glu53) interacts with Mg(2+). Asp57 is an active-site residue. Positions 129 and 132 each coordinate Mg(2+). Glu132 is an active-site residue. One can recognise a DRBM domain in the interval Asp170–Ala238.

This sequence belongs to the ribonuclease III family. In terms of assembly, homodimer. Mg(2+) is required as a cofactor.

It localises to the cytoplasm. It catalyses the reaction Endonucleolytic cleavage to 5'-phosphomonoester.. Functionally, digests double-stranded RNA. Involved in the processing of primary rRNA transcript to yield the immediate precursors to the large and small rRNAs (23S and 16S). Processes some mRNAs, and tRNAs when they are encoded in the rRNA operon. Processes pre-crRNA and tracrRNA of type II CRISPR loci if present in the organism. This Nocardia farcinica (strain IFM 10152) protein is Ribonuclease 3.